The chain runs to 137 residues: NADH dehydrogenase [ubiquinone] 1 beta subcomplex subunit 7 (137 aa).

G2 is lipidated: N-myristoyl glycine. One can recognise a CHCH domain in the interval 56–98 (RDYCAHYLIRLLKCKRDSFPNFXACKQERHDWDYCEHRDYVMR). The Cx9C motif 1 signature appears at 59–69 (CAHYLIRLLKC). 2 disulfide bridges follow: C59-C90 and C69-C80. Phosphoserine is present on S73. The Cx9C motif 2 motif lies at 80-90 (CKQERHDWDYC). The interval 113–137 (KRREKKAAELAKGQGPGEVDPKVAL) is disordered.

Belongs to the complex I NDUFB7 subunit family. As to quaternary structure, complex I is composed of 45 different subunits.

Its subcellular location is the mitochondrion inner membrane. It localises to the mitochondrion intermembrane space. Accessory subunit of the mitochondrial membrane respiratory chain NADH dehydrogenase (Complex I), that is believed not to be involved in catalysis. Complex I functions in the transfer of electrons from NADH to the respiratory chain. The immediate electron acceptor for the enzyme is believed to be ubiquinone. The protein is NADH dehydrogenase [ubiquinone] 1 beta subcomplex subunit 7 (NDUFB7) of Pan troglodytes (Chimpanzee).